Reading from the N-terminus, the 359-residue chain is GTP cyclohydrolase FolE2 (359 aa).

It belongs to the GTP cyclohydrolase IV family.

It carries out the reaction GTP + H2O = 7,8-dihydroneopterin 3'-triphosphate + formate + H(+). Its pathway is cofactor biosynthesis; 7,8-dihydroneopterin triphosphate biosynthesis; 7,8-dihydroneopterin triphosphate from GTP: step 1/1. Functionally, converts GTP to 7,8-dihydroneopterin triphosphate. This Cereibacter sphaeroides (strain KD131 / KCTC 12085) (Rhodobacter sphaeroides) protein is GTP cyclohydrolase FolE2.